Here is a 366-residue protein sequence, read N- to C-terminus: MSEKSASNNKAEFKRQSSPFREIISADHPIYKPAKGRYWLYVALPCPWAQRTLITRALKGLAPIIGCSVAHWHLDDKGWRFLEEGDGKTNERHWFDIAGGISSVNLNTSTPVANIPNNAHRLLVDGTDEPHYGYKRLSDFYFKTKPDYKGRFTVPVLWDLETCTIVNNESSDIIGIMNSAAFDEFVGEEYRQVRLVPRSLEAQITEFNSWVYDKINNGVYKAGFAECAEVYEREVTSLFQYLDKLENLLDKKYTDLEAEYGKNNKDKILDRYFAIGDTLTEADVRLYPTIVRFDVVYHQHFKCNLATIRDDYSRIHTWLKNIYWRHEAFQRTTDFTHIKLGYTRSQPRVNPIGITPLGPKPDIRPP.

Cys-46 is a catalytic residue. The 153-residue stretch at 197–349 (PRSLEAQITE…LGYTRSQPRV (153 aa)) folds into the GST C-terminal domain.

The protein belongs to the GST superfamily. Omega family.

It is found in the cytoplasm. It carries out the reaction RX + glutathione = an S-substituted glutathione + a halide anion + H(+). In terms of biological role, active as '1-Cys' thiol transferase against beta-hydroxyethyl disulfide (HED), as dehydroascorbate reductase and as dimethylarsinic acid reductase, while not active against the standard GST substrate 1-chloro-2,4-dinitrobenzene (CDNB). The sequence is that of Glutathione S-transferase omega-like 3 (GTO3) from Saccharomyces cerevisiae (strain ATCC 204508 / S288c) (Baker's yeast).